The following is a 626-amino-acid chain: UvrABC system protein C (626 aa).

Residues Pro26–Val105 enclose the GIY-YIG domain. A UVR domain is found at Ser215 to Leu250.

Belongs to the UvrC family. Interacts with UvrB in an incision complex.

The protein localises to the cytoplasm. In terms of biological role, the UvrABC repair system catalyzes the recognition and processing of DNA lesions. UvrC both incises the 5' and 3' sides of the lesion. The N-terminal half is responsible for the 3' incision and the C-terminal half is responsible for the 5' incision. In Acaryochloris marina (strain MBIC 11017), this protein is UvrABC system protein C.